The following is a 139-amino-acid chain: uncharacterized protein (139 aa).

An HIT domain is found at 3–110 (IFCNIVEGRD…VPTWSQDPDI (108 aa)). A Histidine triad motif motif is present at residues 95-99 (HSHFH).

This is an uncharacterized protein from Saccharolobus solfataricus (strain ATCC 35092 / DSM 1617 / JCM 11322 / P2) (Sulfolobus solfataricus).